We begin with the raw amino-acid sequence, 82 residues long: MAHKKGAGSTKNGRDSNSKRLGVKVYGDQPVKKGGIIIRQRGLTFKPGINVAVGRDYTLFALQEGDVKFETIADRKFVSVIK.

Positions 1-22 (MAHKKGAGSTKNGRDSNSKRLG) are disordered.

It belongs to the bacterial ribosomal protein bL27 family.

It localises to the plastid. It is found in the chloroplast. The protein is Large ribosomal subunit protein bL27c (rpl27) of Chrysotila carterae (Marine alga).